Here is a 465-residue protein sequence, read N- to C-terminus: Ran-binding protein 3-like (465 aa).

The 142-residue stretch at 276-417 folds into the RanBD1 domain; the sequence is SQPSRKCLLE…ALQSFNKQRD (142 aa).

As to quaternary structure, interacts with SMAD1, SMAD5 and SMAD8; the interaction (with SMAD at least) increases when SMAD1 is not phosphorylated and mediates SMAD1 nuclear export.

The protein resides in the nucleus. Its subcellular location is the cytoplasm. Functionally, nuclear export factor for BMP-specific SMAD1/5/8 that plays a critical role in terminating BMP signaling and regulating mesenchymal stem cell differentiation by blocking osteoblast differentiation to promote myogenic differention. Directly recognizes dephosphorylated SMAD1/5/8 and mediates their nuclear export in a Ran-dependent manner. In Homo sapiens (Human), this protein is Ran-binding protein 3-like (RANBP3L).